The primary structure comprises 262 residues: Light-harvesting complex-like protein 3 isotype 1, chloroplastic (262 aa).

A chloroplast-targeting transit peptide spans 1-39 (MALFSPPISSSSLQNPNFIPKFSFSLLSSNRFSLLSVTR). Helical transmembrane passes span 180 to 200 (AAMIGFFMAYFVDSLTGVGLV) and 202 to 222 (QMGNFFCKTLLFVAVAGVLFI).

As to quaternary structure, interacts with GGR. Forms homodimer, and heterodimer with LIL3.2. As to expression, expressed in photosynthetically active tissues (at protein level).

The protein localises to the plastid. It is found in the chloroplast thylakoid membrane. Functionally, light-harvesting-like protein required for biosynthesis of phytylated chlorophylls and alpha-tocopherol in green seedlings. Functions by anchoring geranylgeranyl reductase (GGR) in the thylakoid membrane, leading to the stabilization of GGR activity. Binds chlorophyll a in the thylakoid membrane. Plays a role in the regulation of chlorophyll biosynthesis under light stress and under standard growth conditions. In Arabidopsis thaliana (Mouse-ear cress), this protein is Light-harvesting complex-like protein 3 isotype 1, chloroplastic (LIL3.1).